The chain runs to 240 residues: UDP-2,3-diacylglucosamine hydrolase (240 aa).

5 residues coordinate Mn(2+): aspartate 8, histidine 10, aspartate 41, asparagine 79, and histidine 114. A substrate-binding site is contributed by 79–80; the sequence is NR. 5 residues coordinate substrate: aspartate 122, serine 160, asparagine 164, lysine 167, and histidine 195. Histidine 195 and histidine 197 together coordinate Mn(2+).

Belongs to the LpxH family. Mn(2+) is required as a cofactor.

It localises to the cell inner membrane. The catalysed reaction is UDP-2-N,3-O-bis[(3R)-3-hydroxytetradecanoyl]-alpha-D-glucosamine + H2O = 2-N,3-O-bis[(3R)-3-hydroxytetradecanoyl]-alpha-D-glucosaminyl 1-phosphate + UMP + 2 H(+). It participates in glycolipid biosynthesis; lipid IV(A) biosynthesis; lipid IV(A) from (3R)-3-hydroxytetradecanoyl-[acyl-carrier-protein] and UDP-N-acetyl-alpha-D-glucosamine: step 4/6. In terms of biological role, hydrolyzes the pyrophosphate bond of UDP-2,3-diacylglucosamine to yield 2,3-diacylglucosamine 1-phosphate (lipid X) and UMP by catalyzing the attack of water at the alpha-P atom. Involved in the biosynthesis of lipid A, a phosphorylated glycolipid that anchors the lipopolysaccharide to the outer membrane of the cell. In Escherichia coli (strain UTI89 / UPEC), this protein is UDP-2,3-diacylglucosamine hydrolase.